A 356-amino-acid chain; its full sequence is Fructose-1,6-bisphosphatase class 1 (356 aa).

A disordered region spans residues 1 to 26 (MAREWPMTHPSNHPMDHHHQTLQAHL). Residues E101, D120, L122, and D123 each coordinate Mg(2+). Substrate is bound by residues 123 to 126 (DGSS) and N211. E283 contacts Mg(2+).

It belongs to the FBPase class 1 family. As to quaternary structure, homotetramer. Mg(2+) serves as cofactor.

It localises to the cytoplasm. It catalyses the reaction beta-D-fructose 1,6-bisphosphate + H2O = beta-D-fructose 6-phosphate + phosphate. Its pathway is carbohydrate biosynthesis; Calvin cycle. This chain is Fructose-1,6-bisphosphatase class 1, found in Bradyrhizobium sp. (strain ORS 278).